A 213-amino-acid chain; its full sequence is Ras-like protein rasU (213 aa).

21 to 28 (GDGGVGKT) contributes to the GTP binding site. The Effector region signature appears at 43-51 (YDPTIEDLY). GTP is bound by residues 68–72 (DTAGQ) and 126–129 (NKSD). Residue Cys210 is modified to Cysteine methyl ester. Cys210 carries S-geranylgeranyl cysteine lipidation. Positions 211–213 (KMI) are cleaved as a propeptide — removed in mature form.

This sequence belongs to the small GTPase superfamily. Ras family.

It is found in the cell membrane. The catalysed reaction is GTP + H2O = GDP + phosphate + H(+). In terms of biological role, ras proteins bind GDP/GTP and possess intrinsic GTPase activity. The protein is Ras-like protein rasU (rasU) of Dictyostelium discoideum (Social amoeba).